The following is a 32-amino-acid chain: Cytochrome b6-f complex subunit 7 (32 aa).

A helical transmembrane segment spans residues 9–27; sequence AVVFWVLIPVGLAGGALLL.

It belongs to the PetM family. The 4 large subunits of the cytochrome b6-f complex are cytochrome b6, subunit IV (17 kDa polypeptide, PetD), cytochrome f and the Rieske protein, while the 4 small subunits are PetG, PetL, PetM and PetN. The complex functions as a dimer.

It is found in the cellular thylakoid membrane. Component of the cytochrome b6-f complex, which mediates electron transfer between photosystem II (PSII) and photosystem I (PSI), cyclic electron flow around PSI, and state transitions. This Synechococcus sp. (strain CC9311) protein is Cytochrome b6-f complex subunit 7.